A 126-amino-acid polypeptide reads, in one-letter code: Holo-[acyl-carrier-protein] synthase (126 aa).

The Mg(2+) site is built by D8 and E57.

This sequence belongs to the P-Pant transferase superfamily. AcpS family. Mg(2+) serves as cofactor.

It localises to the cytoplasm. It catalyses the reaction apo-[ACP] + CoA = holo-[ACP] + adenosine 3',5'-bisphosphate + H(+). Its function is as follows. Transfers the 4'-phosphopantetheine moiety from coenzyme A to a Ser of acyl-carrier-protein. The polypeptide is Holo-[acyl-carrier-protein] synthase (Trichlorobacter lovleyi (strain ATCC BAA-1151 / DSM 17278 / SZ) (Geobacter lovleyi)).